A 1091-amino-acid chain; its full sequence is Voltage-dependent calcium channel subunit alpha-2/delta-3 (1091 aa).

An N-terminal signal peptide occupies residues 1–28; sequence MAGPGSPRRASRGASALLAAALLYAALG. Topologically, residues 29-1068 are extracellular; sequence DVVRSEQQIP…HPEENARECG (1040 aa). N-linked (GlcNAc...) asparagine glycosylation is present at Asn-166. The 183-residue stretch at 256–438 folds into the VWFA domain; it reads DVVILVDVSG…ENVMEYLHVL (183 aa). Residues Asp-262, Ser-264, and Ser-266 each contribute to the a divalent metal cation site. The MIDAS-like motif motif lies at 262 to 266; the sequence is DVSGS. Residue Asn-309 is glycosylated (N-linked (GlcNAc...) asparagine). Cys-412 and Cys-1055 form a disulfide bridge. Positions 452–549 constitute a Cache domain; it reads WTEAYIDSTL…RLLYEEGKKR (98 aa). Asn-553, Asn-632, and Asn-793 each carry an N-linked (GlcNAc...) asparagine glycan. Residue Tyr-924 is modified to Phosphotyrosine. Residues 1069 to 1089 form a helical membrane-spanning segment; it reads GAPSLQAQTVLLLLPLLLMLF. Residues 1090-1091 lie on the Cytoplasmic side of the membrane; the sequence is SR.

It belongs to the calcium channel subunit alpha-2/delta family. As to quaternary structure, dimer formed of alpha-2-2 and delta-2 chains; disulfide-linked. Voltage-dependent calcium channels are multisubunit complexes, consisting of alpha-1 (CACNA1), alpha-2 (CACNA2D), beta (CACNB) and delta (CACNA2D) subunits in a 1:1:1:1 ratio. N-glycosylated. Post-translationally, may be proteolytically processed into subunits alpha-2-3 and delta-3 that are disulfide-linked. It is however unclear whether such cleavage really takes place in vivo and has a functional role. Only detected in brain. Not present in lung, testis, aorta, spleen, jejunum, ventricular muscle and kidney (at protein level). According to PubMed:11687876, it is brain-specific, while according to PubMed:11245980, it is widely expressed.

It is found in the membrane. In terms of biological role, the alpha-2/delta subunit of voltage-dependent calcium channels regulates calcium current density and activation/inactivation kinetics of the calcium channel. Acts as a regulatory subunit for P/Q-type calcium channel (CACNA1A), N-type (CACNA1B), L-type (CACNA1C OR CACNA1D) but not T-type (CACNA1G). The protein is Voltage-dependent calcium channel subunit alpha-2/delta-3 (CACNA2D3) of Homo sapiens (Human).